We begin with the raw amino-acid sequence, 158 residues long: Protein EOLA2 (158 aa).

The 87-residue stretch at Leu-6–Thr-92 folds into the ASCH domain.

It belongs to the EOLA family.

This chain is Protein EOLA2, found in Homo sapiens (Human).